Here is a 188-residue protein sequence, read N- to C-terminus: Peptidyl-tRNA hydrolase (188 aa).

Residue Y14 coordinates tRNA. H19 functions as the Proton acceptor in the catalytic mechanism. Residues Y64, N66, and N112 each coordinate tRNA.

Belongs to the PTH family. In terms of assembly, monomer.

The protein resides in the cytoplasm. The enzyme catalyses an N-acyl-L-alpha-aminoacyl-tRNA + H2O = an N-acyl-L-amino acid + a tRNA + H(+). Hydrolyzes ribosome-free peptidyl-tRNAs (with 1 or more amino acids incorporated), which drop off the ribosome during protein synthesis, or as a result of ribosome stalling. In terms of biological role, catalyzes the release of premature peptidyl moieties from peptidyl-tRNA molecules trapped in stalled 50S ribosomal subunits, and thus maintains levels of free tRNAs and 50S ribosomes. This chain is Peptidyl-tRNA hydrolase, found in Clostridium perfringens (strain SM101 / Type A).